A 171-amino-acid polypeptide reads, in one-letter code: Small ribosomal subunit protein uS4 (171 aa).

The S4 RNA-binding domain maps to 101–165 (RRLQTVVYRK…SSLSDELHPE (65 aa)). Positions 148–171 (SSVGFDEHSSLSDELHPERAEAQE) are disordered. Residues 152–171 (FDEHSSLSDELHPERAEAQE) are compositionally biased toward basic and acidic residues.

Belongs to the universal ribosomal protein uS4 family. In terms of assembly, part of the 30S ribosomal subunit. Contacts protein S5. The interaction surface between S4 and S5 is involved in control of translational fidelity.

One of the primary rRNA binding proteins, it binds directly to 16S rRNA where it nucleates assembly of the body of the 30S subunit. In terms of biological role, with S5 and S12 plays an important role in translational accuracy. The sequence is that of Small ribosomal subunit protein uS4 from Haloarcula marismortui (strain ATCC 43049 / DSM 3752 / JCM 8966 / VKM B-1809) (Halobacterium marismortui).